Reading from the N-terminus, the 754-residue chain is Probable TonB-dependent siderophore receptor PirA (754 aa).

The N-terminal stretch at 1–24 is a signal peptide; that stretch reads MSKRIIQSVLSVSVLASMMSMAFA. Positions 54–181 constitute a TBDR plug domain; it reads EQVKQSLGVS…AGGVVNIITK (128 aa). In terms of domain architecture, TBDR beta-barrel spans 186–754; sequence ETHGSVEFYT…AYYASLKYSF (569 aa). The segment covering 404–414 has biased composition (polar residues); the sequence is VSTTQGKDSSG. A disordered region spans residues 404–424; that stretch reads VSTTQGKDSSGSGYGDQLAKG. Cysteine 511 and cysteine 519 are disulfide-bonded. Positions 737 to 754 match the TonB C-terminal box motif; it reads QTYNEPGRAYYASLKYSF.

The protein belongs to the TonB-dependent receptor family.

The protein resides in the cell outer membrane. Functionally, probably involved in the initial step of iron uptake by binding iron chelating siderophores, thereby allowing extraction of iron from the environment. May bind the siderophore, ferric enterobactin, with micromolar affinity. This chain is Probable TonB-dependent siderophore receptor PirA, found in Acinetobacter baumannii (strain ATCC 19606 / DSM 30007 / JCM 6841 / CCUG 19606 / CIP 70.34 / NBRC 109757 / NCIMB 12457 / NCTC 12156 / 81).